A 417-amino-acid chain; its full sequence is Hyaluronidase-3 (417 aa).

The first 20 residues, 1-20 (MTTQLGPALVLGVALCLGCG), serve as a signal peptide directing secretion. 5 disulfide bridges follow: cysteine 42-cysteine 331, cysteine 205-cysteine 220, cysteine 356-cysteine 367, cysteine 361-cysteine 395, and cysteine 397-cysteine 406. N-linked (GlcNAc...) asparagine glycosylation occurs at asparagine 69. Catalysis depends on glutamate 129, which acts as the Proton donor. Asparagine 215 carries an N-linked (GlcNAc...) asparagine glycan. The region spanning 352 to 407 (AAMACSHQRCHGHGRCARRDPGQMEAFLHLWPDGSLGDWKSFSCHCYWGWAGPTCQ) is the EGF-like domain.

Belongs to the glycosyl hydrolase 56 family. In terms of processing, N-glycosylated. In terms of tissue distribution, expressed in sperm. Highly expressed in epidermis of the skin, where it is expressed intracellularily in the deep horny layer (at protein level). Bone marrow, testis and kidney.

It is found in the secreted. The protein resides in the cell membrane. It localises to the cytoplasmic vesicle. The protein localises to the secretory vesicle. Its subcellular location is the acrosome. It is found in the endoplasmic reticulum. The protein resides in the early endosome. The enzyme catalyses Random hydrolysis of (1-&gt;4)-linkages between N-acetyl-beta-D-glucosamine and D-glucuronate residues in hyaluronate.. In terms of biological role, facilitates sperm penetration into the layer of cumulus cells surrounding the egg by digesting hyaluronic acid. Involved in induction of the acrosome reaction in the sperm. Involved in follicular atresia, the breakdown of immature ovarian follicles that are not selected to ovulate. Induces ovarian granulosa cell apoptosis, possibly via apoptotic signaling pathway involving CASP8 and CASP3 activation, and poly(ADP-ribose) polymerase (PARP) cleavage. Has no hyaluronidase activity in embryonic fibroblasts in vitro. Has no hyaluronidase activity in granulosa cells in vitro. The chain is Hyaluronidase-3 (HYAL3) from Homo sapiens (Human).